The sequence spans 221 residues: Histone H1.3 (221 aa).

Residues 1–17 (MSETAPAAPAAPAPVEK) show a composition bias toward low complexity. Residues 1-42 (MSETAPAAPAAPAPVEKTPVKKKAKKTGAAAGKRKASGPPVS) are disordered. Ser-2 is subject to N-acetylserine. Residue Ser-2 is modified to Phosphoserine. Lys-17 carries the N6-acetyllysine modification. Thr-18 is subject to Phosphothreonine. Residues 20–36 (VKKKAKKTGAAAGKRKA) show a composition bias toward basic residues. N6-(beta-hydroxybutyryl)lysine occurs at positions 33, 35, and 53. Residues 37–110 (SGPPVSELIT…GASGSFKLNK (74 aa)) form the H15 domain. At Arg-55 the chain carries Citrulline. 3 positions are modified to N6-(beta-hydroxybutyryl)lysine: Lys-65, Lys-86, and Lys-91. The interval 92–221 (GTLVQTKGTG…KAKKAAPRKK (130 aa)) is disordered. A Phosphoserine; by PKC modification is found at Ser-105. N6-(beta-hydroxybutyryl)lysine is present on residues Lys-107 and Lys-141. 4 stretches are compositionally biased toward basic residues: residues 120–141 (KAKKAGAAKAKKPAGAAKKPKK), 150–161 (KTAKKTPKKAKK), 170–187 (KVSKSPKKVKAAKPKKAA), and 194–221 (KAPKAKASKPKASKPKATKAKKAAPRKK).

This sequence belongs to the histone H1/H5 family. Post-translationally, H1 histones are progressively phosphorylated during the cell cycle, becoming maximally phosphorylated during late G2 phase and M phase, and being dephosphorylated sharply thereafter. Hydroxybutyrylation of histones is induced by starvation. In terms of processing, citrullination at Arg-55 (H1R54ci) by PADI4 takes place within the DNA-binding site of H1 and results in its displacement from chromatin and global chromatin decondensation, thereby promoting pluripotency and stem cell maintenance.

The protein resides in the nucleus. The protein localises to the chromosome. Its function is as follows. Histone H1 protein binds to linker DNA between nucleosomes forming the macromolecular structure known as the chromatin fiber. Histones H1 are necessary for the condensation of nucleosome chains into higher-order structured fibers. Also acts as a regulator of individual gene transcription through chromatin remodeling, nucleosome spacing and DNA methylation. This Mus musculus (Mouse) protein is Histone H1.3.